The primary structure comprises 307 residues: 17-beta-hydroxysteroid dehydrogenase type 3 (307 aa).

Residues 6–26 traverse the membrane as a helical segment; that stretch reads IIFVLTGTCAILVFGGKIASL. 47 to 76 serves as a coordination point for NADP(+); that stretch reads GKWAVITGGSDGIGRAYAEELSKQGMSVII. Serine 187 is a substrate binding site. Residue tyrosine 200 is the Proton acceptor of the active site.

It belongs to the short-chain dehydrogenases/reductases (SDR) family. In terms of tissue distribution, expression shows strong sexual dimorphism. In female, highly expressed in ovaries, and at lower levels in skin muscle, eyes and liver. In males, strongly expressed in liver and at lower levels in testis, spleen, kidney, intestine and muscle.

The protein localises to the endoplasmic reticulum. It is found in the membrane. It catalyses the reaction a 17beta-hydroxy steroid + NADP(+) = a 17-oxo steroid + NADPH + H(+). The enzyme catalyses testosterone + NADP(+) = androst-4-ene-3,17-dione + NADPH + H(+). It carries out the reaction 3beta-hydroxyandrost-5-en-17-one + NADPH + H(+) = androst-5-en-3beta,17beta-diol + NADP(+). The catalysed reaction is 3beta-hydroxy-5alpha-androstan-17-one + NADPH + H(+) = 5alpha-androstane-3beta,17beta-diol + NADP(+). It catalyses the reaction androst-4-ene-3,11,17-trione + NADPH + H(+) = 17beta-hydroxyandrost-4-ene-3,11-dione + NADP(+). The enzyme catalyses 11beta-hydroxyandrost-4-ene-3,17-dione + NADPH + H(+) = 11beta,17beta-dihydroxyandrost-4-ene-3-one + NADP(+). It participates in hormone biosynthesis; testosterone biosynthesis. It functions in the pathway steroid metabolism. Catalyzes the conversion of 17-oxosteroids to 17beta-hydroxysteroids in the presence of NADPH. Favors the reduction of androstenedione to testosterone. Testosterone is the key androgen driving male development and function. Among further tested androgens epiandrosterone and dehydroepiandrosterone are accepted as substrates and reduced at C-17. Can also reduce 11-ketoandrostenedione as well as 11beta-hydroxyandrostenedione at C-17 to the respective testosterone forms. Cannot use androsterone and androstanedione as substrates. In Danio rerio (Zebrafish), this protein is 17-beta-hydroxysteroid dehydrogenase type 3 (hsd17b3).